A 175-amino-acid chain; its full sequence is Endoribonuclease YbeY (175 aa).

Zn(2+)-binding residues include H137, H141, and H147.

It belongs to the endoribonuclease YbeY family. Zn(2+) is required as a cofactor.

It is found in the cytoplasm. Functionally, single strand-specific metallo-endoribonuclease involved in late-stage 70S ribosome quality control and in maturation of the 3' terminus of the 16S rRNA. In Burkholderia ambifaria (strain ATCC BAA-244 / DSM 16087 / CCUG 44356 / LMG 19182 / AMMD) (Burkholderia cepacia (strain AMMD)), this protein is Endoribonuclease YbeY.